Consider the following 149-residue polypeptide: MHCPFCSATDTKVIDSRLVADGHQVRRRRECAECHERFTTFEGAELVMPRVVKQDGSRQPFDEEKLRGGMLRAVEKRPVSMDQIEQALTKIKSTLRATGEREVKSEMIGNLMMDQLVNLDKVAYIRFASVYRAFEDVSEFGDAIAKLQK.

Residues 3 to 34 (CPFCSATDTKVIDSRLVADGHQVRRRRECAEC) fold into a zinc finger. Positions 49 to 139 (PRVVKQDGSR…VYRAFEDVSE (91 aa)) constitute an ATP-cone domain.

It belongs to the NrdR family. Requires Zn(2+) as cofactor.

Negatively regulates transcription of bacterial ribonucleotide reductase nrd genes and operons by binding to NrdR-boxes. This Shewanella sediminis (strain HAW-EB3) protein is Transcriptional repressor NrdR.